A 341-amino-acid chain; its full sequence is Dihydroorotate dehydrogenase (quinone) (341 aa).

Residues 61 to 65 and Thr-85 contribute to the FMN site; that span reads AGLDK. Lys-65 lines the substrate pocket. 110-114 provides a ligand contact to substrate; sequence NRMGF. FMN-binding residues include Asn-138 and Asn-171. Asn-171 contributes to the substrate binding site. Ser-174 acts as the Nucleophile in catalysis. Asn-176 lines the substrate pocket. Residues Lys-216 and Thr-244 each contribute to the FMN site. Substrate is bound at residue 245 to 246; sequence NT. FMN contacts are provided by residues Gly-267, Gly-296, and 317–318; that span reads YS.

This sequence belongs to the dihydroorotate dehydrogenase family. Type 2 subfamily. Monomer. FMN is required as a cofactor.

It localises to the cell membrane. The enzyme catalyses (S)-dihydroorotate + a quinone = orotate + a quinol. The protein operates within pyrimidine metabolism; UMP biosynthesis via de novo pathway; orotate from (S)-dihydroorotate (quinone route): step 1/1. In terms of biological role, catalyzes the conversion of dihydroorotate to orotate with quinone as electron acceptor. This is Dihydroorotate dehydrogenase (quinone) from Pseudomonas fluorescens (strain SBW25).